The sequence spans 214 residues: Large ribosomal subunit protein uL16 (214 aa).

The residue at position 32 (Arg-32) is a Citrulline. Lys-175 is covalently cross-linked (Glycyl lysine isopeptide (Lys-Gly) (interchain with G-Cter in SUMO2)). Residue Lys-188 forms a Glycyl lysine isopeptide (Lys-Gly) (interchain with G-Cter in ubiquitin) linkage.

The protein belongs to the universal ribosomal protein uL16 family. Component of the large ribosomal subunit. Mature ribosomes consist of a small (40S) and a large (60S) subunit. The 40S subunit contains about 33 different proteins and 1 molecule of RNA (18S). The 60S subunit contains about 49 different proteins and 3 molecules of RNA (28S, 5.8S and 5S). In terms of processing, citrullinated by PADI4. Ufmylated by UFL1.

It is found in the cytoplasm. In terms of biological role, component of the large ribosomal subunit. Plays a role in the formation of actively translating ribosomes. May play a role in the embryonic brain development. The sequence is that of Large ribosomal subunit protein uL16 from Pongo abelii (Sumatran orangutan).